The chain runs to 153 residues: General odorant-binding protein lush (153 aa).

The first 29 residues, 1-29, serve as a signal peptide directing secretion; sequence MKHWKRRSSAVFAIVLQVLVLLLPDPAVA. 3 disulfides stabilise this stretch: Cys46–Cys79, Cys75–Cys132, and Cys121–Cys141. 1-propanol contacts are provided by Ser81 and Thr86. Butan-1-ol-binding residues include Ser81 and Thr86. Ethanol is bound by residues Ser81 and Thr86.

Belongs to the PBP/GOBP family. In terms of tissue distribution, specifically expressed in chemosensory system in both males and females. Expressed in a subset of trichoid chemosensory sensilla located on the ventral-lateral surface of the third antennal segment. Secreted from non-neuronal support cells into the sensillum lymph that bathes the olfactory neurons within these sensilla.

The protein resides in the secreted. Its function is as follows. Odorant-binding protein required for olfactory behavior and for activity of pheromone-sensitive neurons. Binds to alcohols and mediates avoidance behavior to high concentrations of alcohols, the alcohol-binding possibly resulting in activation of receptors on T2B neurons, the activation of these receptors inhibiting these neurons. Acts in concert with Snmp and lush to capture cVA molecules on the surface of Or67d expressing olfactory dendrites and facilitate their transfer to the odorant-receptor Orco complex. Required for cVA response, probably by binding to VA. May act by serving as an adapter that bridges the presence of gaseous pheromone molecules, cVA, to activation of specific neuronal receptors expressed on T1 olfactory neurons, possibly via a specific conformational change induced by cVA that in turn activates T1 receptors. T1 neurons are excited by the pheromone VA, while T2 neurons are inhibited by alcohols. Also binds to phthalates. In Drosophila melanogaster (Fruit fly), this protein is General odorant-binding protein lush (lush).